Here is a 204-residue protein sequence, read N- to C-terminus: Peptide deformylase (204 aa).

Fe cation-binding residues include Cys-131 and His-174. Glu-175 is a catalytic residue. Fe cation is bound at residue His-178.

Belongs to the polypeptide deformylase family. Fe(2+) serves as cofactor.

The catalysed reaction is N-terminal N-formyl-L-methionyl-[peptide] + H2O = N-terminal L-methionyl-[peptide] + formate. Its function is as follows. Removes the formyl group from the N-terminal Met of newly synthesized proteins. Requires at least a dipeptide for an efficient rate of reaction. N-terminal L-methionine is a prerequisite for activity but the enzyme has broad specificity at other positions. The protein is Peptide deformylase of Streptococcus pyogenes serotype M18 (strain MGAS8232).